Reading from the N-terminus, the 64-residue chain is uncharacterized protein (64 aa).

Residues 41–61 (VFLALKVLGIMVLFYLLDAII) form a helical membrane-spanning segment.

Its subcellular location is the membrane. This is an uncharacterized protein from Acheta domesticus (House cricket).